A 98-amino-acid polypeptide reads, in one-letter code: NADH-ubiquinone oxidoreductase chain 4L (98 aa).

Transmembrane regions (helical) follow at residues 2 to 22 (PSIS…MLMF), 29 to 49 (SLLC…LIIL), and 61 to 81 (ILLL…LVMV).

Belongs to the complex I subunit 4L family. Core subunit of respiratory chain NADH dehydrogenase (Complex I) which is composed of 45 different subunits.

It is found in the mitochondrion inner membrane. The enzyme catalyses a ubiquinone + NADH + 5 H(+)(in) = a ubiquinol + NAD(+) + 4 H(+)(out). Its function is as follows. Core subunit of the mitochondrial membrane respiratory chain NADH dehydrogenase (Complex I) which catalyzes electron transfer from NADH through the respiratory chain, using ubiquinone as an electron acceptor. Part of the enzyme membrane arm which is embedded in the lipid bilayer and involved in proton translocation. The chain is NADH-ubiquinone oxidoreductase chain 4L (MT-ND4L) from Microcebus griseorufus (Gray-brown mouse lemur).